We begin with the raw amino-acid sequence, 1070 residues long: DNA-directed RNA polymerase subunit beta (1070 aa).

This sequence belongs to the RNA polymerase beta chain family. In plastids the minimal PEP RNA polymerase catalytic core is composed of four subunits: alpha, beta, beta', and beta''. When a (nuclear-encoded) sigma factor is associated with the core the holoenzyme is formed, which can initiate transcription.

It is found in the plastid. Its subcellular location is the chloroplast. The enzyme catalyses RNA(n) + a ribonucleoside 5'-triphosphate = RNA(n+1) + diphosphate. Functionally, DNA-dependent RNA polymerase catalyzes the transcription of DNA into RNA using the four ribonucleoside triphosphates as substrates. The sequence is that of DNA-directed RNA polymerase subunit beta from Buxus microphylla (Littleleaf boxwood).